Consider the following 347-residue polypeptide: MSRSIDLAVIPGDGIGQEVVAQGLKVLNAVLPQDVKLETKEYDLGAQRWHRTGDTLPDAELEALKGHDAILLGAIGDPSVPSGVLERGLLLKLRFAFDHFINLRPSKLFPNTATPLAGRPDIDFVVVREGTEGPYTGNGGSLRTGTPAEVATEVSLNTAYGVERVVRDAFERAAARPRKKLTLVHKNNVLVYAGHLWKNTFDKVAAEYPQVSTDYLHVDAATIFFVTQPERFDVIVTDNLFGDILTDLAAAVSGGIGLAASGNINPTGAFPSMFEPVHGSAPDIAGQGKADPTATVLSVALLLRHLGYEAEAARIEDAVSADLAERDGSVARTTDEIGDALAVRVAS.

Substrate contacts are provided by Arg-94, Arg-104, Arg-128, and Asp-219. Mg(2+) contacts are provided by Asp-219, Asp-243, and Asp-247. 279–291 provides a ligand contact to NAD(+); the sequence is GSAPDIAGQGKAD.

Belongs to the isocitrate and isopropylmalate dehydrogenases family. LeuB type 2 subfamily. Homodimer. It depends on Mg(2+) as a cofactor. Requires Mn(2+) as cofactor.

The protein resides in the cytoplasm. The enzyme catalyses (2R,3S)-3-isopropylmalate + NAD(+) = 4-methyl-2-oxopentanoate + CO2 + NADH. Its pathway is amino-acid biosynthesis; L-leucine biosynthesis; L-leucine from 3-methyl-2-oxobutanoate: step 3/4. Its function is as follows. Catalyzes the oxidation of 3-carboxy-2-hydroxy-4-methylpentanoate (3-isopropylmalate) to 3-carboxy-4-methyl-2-oxopentanoate. The product decarboxylates to 4-methyl-2 oxopentanoate. This is 3-isopropylmalate dehydrogenase from Streptomyces griseus subsp. griseus (strain JCM 4626 / CBS 651.72 / NBRC 13350 / KCC S-0626 / ISP 5235).